A 129-amino-acid polypeptide reads, in one-letter code: Glycine cleavage system H protein (129 aa).

The Lipoyl-binding domain maps to 24–106; the sequence is AVRIGLSAYA…HGEGWLLVIQ (83 aa). An N6-lipoyllysine modification is found at Lys-65.

This sequence belongs to the GcvH family. As to quaternary structure, the glycine cleavage system is composed of four proteins: P, T, L and H. (R)-lipoate is required as a cofactor.

Functionally, the glycine cleavage system catalyzes the degradation of glycine. The H protein shuttles the methylamine group of glycine from the P protein to the T protein. In Synechococcus sp. (strain WH7803), this protein is Glycine cleavage system H protein.